The chain runs to 184 residues: Photosystem I assembly protein Ycf4 (184 aa).

A run of 2 helical transmembrane segments spans residues 20-40 (GNFF…VVGI) and 64-84 (IVMS…WCTI).

It belongs to the Ycf4 family.

It is found in the plastid. Its subcellular location is the chloroplast thylakoid membrane. Seems to be required for the assembly of the photosystem I complex. This Citrus sinensis (Sweet orange) protein is Photosystem I assembly protein Ycf4.